The following is a 307-amino-acid chain: UDP-N-acetylenolpyruvoylglucosamine reductase (307 aa).

The FAD-binding PCMH-type domain maps to 34-199 (RVGGPAQVLF…TAVRFRGTPS (166 aa)). Arginine 179 is a catalytic residue. Residue serine 228 is the Proton donor of the active site. The active site involves glutamate 298.

It belongs to the MurB family. Requires FAD as cofactor.

The protein resides in the cytoplasm. It catalyses the reaction UDP-N-acetyl-alpha-D-muramate + NADP(+) = UDP-N-acetyl-3-O-(1-carboxyvinyl)-alpha-D-glucosamine + NADPH + H(+). Its pathway is cell wall biogenesis; peptidoglycan biosynthesis. Its function is as follows. Cell wall formation. The polypeptide is UDP-N-acetylenolpyruvoylglucosamine reductase (Bradyrhizobium sp. (strain ORS 278)).